Reading from the N-terminus, the 562-residue chain is Arginine--tRNA ligase (562 aa).

The 'HIGH' region signature appears at 121-131 (PNIAKPMGMGH).

This sequence belongs to the class-I aminoacyl-tRNA synthetase family. Monomer.

It is found in the cytoplasm. It carries out the reaction tRNA(Arg) + L-arginine + ATP = L-arginyl-tRNA(Arg) + AMP + diphosphate. The protein is Arginine--tRNA ligase of Limosilactobacillus reuteri (strain DSM 20016) (Lactobacillus reuteri).